The following is a 105-amino-acid chain: Translation initiation factor 1A (105 aa).

The S1-like domain occupies 18-92 (IRVKLPNKRI…DKCDIIYRYT (75 aa)).

The protein belongs to the eIF-1A family.

Seems to be required for maximal rate of protein biosynthesis. Enhances ribosome dissociation into subunits and stabilizes the binding of the initiator Met-tRNA(I) to 40 S ribosomal subunits. The polypeptide is Translation initiation factor 1A (eIF1A) (Methanocorpusculum labreanum (strain ATCC 43576 / DSM 4855 / Z)).